Here is a 327-residue protein sequence, read N- to C-terminus: Altered inheritance rate of mitochondria protein 25 (327 aa).

The protein belongs to the phospholipid scramblase family.

The protein localises to the mitochondrion. This chain is Altered inheritance rate of mitochondria protein 25 (AIM25), found in Saccharomyces cerevisiae (strain ATCC 204508 / S288c) (Baker's yeast).